Consider the following 310-residue polypeptide: Methionyl-tRNA formyltransferase (310 aa).

A (6S)-5,6,7,8-tetrahydrofolate-binding site is contributed by 106 to 109 (SLLP).

It belongs to the Fmt family.

It carries out the reaction L-methionyl-tRNA(fMet) + (6R)-10-formyltetrahydrofolate = N-formyl-L-methionyl-tRNA(fMet) + (6S)-5,6,7,8-tetrahydrofolate + H(+). Attaches a formyl group to the free amino group of methionyl-tRNA(fMet). The formyl group appears to play a dual role in the initiator identity of N-formylmethionyl-tRNA by promoting its recognition by IF2 and preventing the misappropriation of this tRNA by the elongation apparatus. The sequence is that of Methionyl-tRNA formyltransferase from Fervidobacterium nodosum (strain ATCC 35602 / DSM 5306 / Rt17-B1).